Reading from the N-terminus, the 113-residue chain is Large ribosomal subunit protein uL22 (113 aa).

It belongs to the universal ribosomal protein uL22 family. In terms of assembly, part of the 50S ribosomal subunit.

Functionally, this protein binds specifically to 23S rRNA; its binding is stimulated by other ribosomal proteins, e.g. L4, L17, and L20. It is important during the early stages of 50S assembly. It makes multiple contacts with different domains of the 23S rRNA in the assembled 50S subunit and ribosome. The globular domain of the protein is located near the polypeptide exit tunnel on the outside of the subunit, while an extended beta-hairpin is found that lines the wall of the exit tunnel in the center of the 70S ribosome. This Anoxybacillus flavithermus (strain DSM 21510 / WK1) protein is Large ribosomal subunit protein uL22.